We begin with the raw amino-acid sequence, 83 residues long: Beta-defensin 119 (83 aa).

A signal peptide spans 1 to 20; the sequence is MKFLFLFLAILLAMEPVVSG. 3 disulfide bridges follow: Cys-27/Cys-54, Cys-34/Cys-48, and Cys-38/Cys-55.

Belongs to the beta-defensin family.

The protein resides in the secreted. Its function is as follows. Has antibacterial activity. In Bos taurus (Bovine), this protein is Beta-defensin 119 (DEFB119).